The following is a 298-amino-acid chain: GTPase Era (298 aa).

The region spanning 4–171 (KSGFVSIVGR…VEGIFELLPE (168 aa)) is the Era-type G domain. The interval 12–19 (GRPNVGKS) is G1. 12 to 19 (GRPNVGKS) serves as a coordination point for GTP. Positions 38 to 42 (QTTRN) are G2. Residues 59–62 (DTPG) are G3. GTP-binding positions include 59–63 (DTPGV) and 121–124 (NKID). The tract at residues 121–124 (NKID) is G4. A G5 region spans residues 150-152 (ISA). The KH type-2 domain occupies 202–280 (TREEIPHSVA…YLDLWVKVKE (79 aa)).

The protein belongs to the TRAFAC class TrmE-Era-EngA-EngB-Septin-like GTPase superfamily. Era GTPase family. In terms of assembly, monomer.

The protein resides in the cytoplasm. Its subcellular location is the cell membrane. Functionally, an essential GTPase that binds both GDP and GTP, with rapid nucleotide exchange. Plays a role in 16S rRNA processing and 30S ribosomal subunit biogenesis and possibly also in cell cycle regulation and energy metabolism. The polypeptide is GTPase Era (Carboxydothermus hydrogenoformans (strain ATCC BAA-161 / DSM 6008 / Z-2901)).